Reading from the N-terminus, the 293-residue chain is MFNFFKKIVNKIKGEEVKEKKRESVPKEELEEILIGFDIQYDLIESLLKHLGDLITPKQLEVALLRFVRGESYYDKTRLKTITTKPLVHLIVGVNGAGKTTTIAKLAKLSLKQHKKALLGAGDTFRAAAVKQLQLWGEKLNVQVISAKEGSDPSSLAYNTIESAIAKNIDEVFIDTAGRLHNQTNLKNELSKIAHTCSKVLKDAPFYKFLILDGTQGSSGLTQAKIFHETLALDGVIMTKLDGTSKGGAILSVLYELKLPILYLGMGEKEDDLIAFDEERFIEDLVDAVFVEQ.

GTP is bound by residues 93 to 100 (GVNGAGKT), 175 to 179 (DTAGR), and 239 to 242 (TKLD).

Belongs to the GTP-binding SRP family. FtsY subfamily. Part of the signal recognition particle protein translocation system, which is composed of SRP and FtsY. SRP is a ribonucleoprotein composed of Ffh and a 4.5S RNA molecule.

The protein resides in the cell inner membrane. It is found in the cytoplasm. The enzyme catalyses GTP + H2O = GDP + phosphate + H(+). Involved in targeting and insertion of nascent membrane proteins into the cytoplasmic membrane. Acts as a receptor for the complex formed by the signal recognition particle (SRP) and the ribosome-nascent chain (RNC). Interaction with SRP-RNC leads to the transfer of the RNC complex to the Sec translocase for insertion into the membrane, the hydrolysis of GTP by both Ffh and FtsY, and the dissociation of the SRP-FtsY complex into the individual components. The polypeptide is Signal recognition particle receptor FtsY (Helicobacter pylori (strain J99 / ATCC 700824) (Campylobacter pylori J99)).